The chain runs to 86 residues: Large ribosomal subunit protein bL31 (86 aa).

Positions 65–86 are disordered; sequence YGMGSANSATSKEQKEEKDSNK. Over residues 76-86 the composition is skewed to basic and acidic residues; that stretch reads KEQKEEKDSNK.

The protein belongs to the bacterial ribosomal protein bL31 family. Type A subfamily. Part of the 50S ribosomal subunit.

Binds the 23S rRNA. This chain is Large ribosomal subunit protein bL31, found in Prochlorococcus marinus (strain MIT 9312).